The chain runs to 399 residues: Ornithine aminotransferase (399 aa).

An N6-(pyridoxal phosphate)lysine modification is found at lysine 255.

It belongs to the class-III pyridoxal-phosphate-dependent aminotransferase family. OAT subfamily. Pyridoxal 5'-phosphate is required as a cofactor.

The protein resides in the cytoplasm. The enzyme catalyses a 2-oxocarboxylate + L-ornithine = L-glutamate 5-semialdehyde + an L-alpha-amino acid. It functions in the pathway amino-acid biosynthesis; L-proline biosynthesis; L-glutamate 5-semialdehyde from L-ornithine: step 1/1. Catalyzes the interconversion of ornithine to glutamate semialdehyde. In Brevibacillus brevis (strain 47 / JCM 6285 / NBRC 100599), this protein is Ornithine aminotransferase.